Here is a 222-residue protein sequence, read N- to C-terminus: Phosphoglycolate phosphatase (222 aa).

D8 functions as the Nucleophile in the catalytic mechanism. D8 and D10 together coordinate Mg(2+). K150 lines the substrate pocket. The Mg(2+) site is built by D173 and D177.

This sequence belongs to the archaeal SPP-like hydrolase family. Requires Mg(2+) as cofactor.

It carries out the reaction 2-phosphoglycolate + H2O = glycolate + phosphate. Its function is as follows. Catalyzes the dephosphorylation of 2-phosphoglycolate. The chain is Phosphoglycolate phosphatase from Metallosphaera sedula (strain ATCC 51363 / DSM 5348 / JCM 9185 / NBRC 15509 / TH2).